Consider the following 498-residue polypeptide: ATP synthase subunit beta, chloroplastic (498 aa).

172-179 (GGAGVGKT) contacts ATP.

This sequence belongs to the ATPase alpha/beta chains family. F-type ATPases have 2 components, CF(1) - the catalytic core - and CF(0) - the membrane proton channel. CF(1) has five subunits: alpha(3), beta(3), gamma(1), delta(1), epsilon(1). CF(0) has four main subunits: a(1), b(1), b'(1) and c(9-12).

The protein resides in the plastid. Its subcellular location is the chloroplast thylakoid membrane. The enzyme catalyses ATP + H2O + 4 H(+)(in) = ADP + phosphate + 5 H(+)(out). Produces ATP from ADP in the presence of a proton gradient across the membrane. The catalytic sites are hosted primarily by the beta subunits. This is ATP synthase subunit beta, chloroplastic from Citrus sinensis (Sweet orange).